The chain runs to 455 residues: Venom prothrombin activator hopsarin-D (455 aa).

An N-terminal signal peptide occupies residues 1–20 (MAPQLLLCLILTFLWSVPEA). The propeptide occupies 21 to 40 (ESNVFLKSKVANRFLQRTKR). The region spanning 41-86 (SNSLFEEIRPGNIERECIEEKCSKEEAREVFEDNEKTETFWNVYVD) is the Gla domain. 11 positions are modified to 4-carboxyglutamate: Glu46, Glu47, Glu54, Glu56, Glu59, Glu60, Glu65, Glu66, Glu69, Glu72, and Glu75. A disulfide bridge links Cys57 with Cys62. The EGF-like 1; calcium-binding domain maps to 86–121 (DGDQCSSNPCHYHGTCKDGIGSYTCTCLPNYEGKNC). Disulfide bonds link Cys90/Cys101, Cys95/Cys110, Cys112/Cys121, Cys129/Cys140, Cys136/Cys149, Cys151/Cys164, Cys172/Cys328, Cys236/Cys252, Cys376/Cys390, and Cys401/Cys429. An O-linked (Hex...) serine glycan is attached at Ser92. The EGF-like 2 domain occupies 129 to 164 (CRAFNGNCWHFCKRVQSETQCSCAESYRLGVDGHSC). The propeptide at 182–209 (REASLPDFVQSQKATLLKKSDNPSPDIR) is activation peptide. A Peptidase S1 domain is found at 210–453 (IVNGMDSKLG…FIPWIKKIMS (244 aa)). His251 acts as the Charge relay system in catalysis. N-linked (GlcNAc...) asparagine glycosylation occurs at Asn254. Catalysis depends on Asp308, which acts as the Charge relay system. Ser405 serves as the catalytic Charge relay system.

This sequence belongs to the peptidase S1 family. Snake venom subfamily. Heterodimer of a light chain and a heavy chain; disulfide-linked. The vitamin K-dependent, enzymatic carboxylation of some glutamate residues allows the modified protein to bind calcium. In terms of tissue distribution, expressed by the venom gland.

Its subcellular location is the secreted. It catalyses the reaction Selective cleavage of Arg-|-Thr and then Arg-|-Ile bonds in prothrombin to form thrombin.. In terms of biological role, snake prothrombin activator that attacks the hemostatic system of prey. This protein is functionally similar to blood coagulation factor Xa. The procoagulant activity of hopsarin-D is approximately 10-fold lower than that of trocarin-D and FXa. This is Venom prothrombin activator hopsarin-D from Hoplocephalus stephensii (Stephens's banded snake).